Reading from the N-terminus, the 365-residue chain is Protein Tob1 (365 aa).

Positions 22–39 (RRRVNIFGEELERLLKQK) match the Bipartite nuclear localization signal motif. The interval 82 to 92 (VRGNLPQDLSV) is important for nuclear localization. A compositionally biased stretch (low complexity) spans 144-160 (DPASSVSSSPSPPFGHS). Residues 144–171 (DPASSVSSSPSPPFGHSAAVSPTFMPRS) are disordered. Residues 161 to 220 (AAVSPTFMPRSTQPLTFTTATFAATKFGSTKMKNSGRSSKVARTSPISLGLNVNVNDLLK) form a required for interaction with CPEB3 region. A Phosphothreonine modification is found at threonine 204. Residues 228 to 236 (MHSLYGLGL) carry the Nuclear export signal motif. Residues 233 to 287 (GLGLGSQQQPQPQPQQPPSQPPPPPPPPQQQQQHQQQQQQQQQQQQQPQQQTSAL) form a disordered region. The span at 243–261 (QPQPQQPPSQPPPPPPPPQ) shows a compositional bias: pro residues. The segment covering 262 to 283 (QQQQHQQQQQQQQQQQQQPQQQ) has biased composition (low complexity).

The protein belongs to the BTG family. As to quaternary structure, interacts with ERBB2. Interacts with CNOT7. Interacts with CPEB3 (via C-terminal RNA-binding region); recruits CNOT7 to CPEB3 to form a ternary complex required for mRNA deadenylation and decay. Interacts with CNOT8. Interacts with CPEB4. In terms of processing, phosphorylated on Ser and Thr residues.

It localises to the cytoplasm. Its subcellular location is the nucleus. Anti-proliferative protein; the function is mediated by association with deadenylase subunits of the CCR4-NOT complex. Mediates CPEB3-accelerated mRNA deadenylation by binding to CPEB3 and recruiting CNOT7 which leads to target mRNA deadenylation and decay. The polypeptide is Protein Tob1 (Tob1) (Rattus norvegicus (Rat)).